A 249-amino-acid polypeptide reads, in one-letter code: Nodulation protein H (249 aa).

In terms of biological role, required for the formation of sulfated nod factor. Proposed to transfer activated sulfate (PAPS) to a N-acetylglucosamine of the nod factor. This Rhizobium tropici protein is Nodulation protein H (nodH).